Here is a 179-residue protein sequence, read N- to C-terminus: Large ribosomal subunit protein uL6 (179 aa).

It belongs to the universal ribosomal protein uL6 family. Part of the 50S ribosomal subunit.

Functionally, this protein binds to the 23S rRNA, and is important in its secondary structure. It is located near the subunit interface in the base of the L7/L12 stalk, and near the tRNA binding site of the peptidyltransferase center. This Nocardia farcinica (strain IFM 10152) protein is Large ribosomal subunit protein uL6.